Consider the following 116-residue polypeptide: NADH-ubiquinone oxidoreductase chain 3 (116 aa).

3 helical membrane-spanning segments follow: residues Leu3–Phe23, Phe56–Leu76, and Pro85–His105.

Belongs to the complex I subunit 3 family.

Its subcellular location is the mitochondrion membrane. It catalyses the reaction a ubiquinone + NADH + 5 H(+)(in) = a ubiquinol + NAD(+) + 4 H(+)(out). Its function is as follows. Core subunit of the mitochondrial membrane respiratory chain NADH dehydrogenase (Complex I) that is believed to belong to the minimal assembly required for catalysis. Complex I functions in the transfer of electrons from NADH to the respiratory chain. The immediate electron acceptor for the enzyme is believed to be ubiquinone. In Latimeria chalumnae (Coelacanth), this protein is NADH-ubiquinone oxidoreductase chain 3 (MT-ND3).